The sequence spans 1393 residues: DNA-directed RNA polymerase subunit beta' (1393 aa).

Zn(2+) is bound by residues Cys-72, Cys-74, Cys-87, and Cys-90. Mg(2+) contacts are provided by Asp-463, Asp-465, and Asp-467. Residues Cys-812, Cys-887, Cys-894, and Cys-897 each contribute to the Zn(2+) site.

The protein belongs to the RNA polymerase beta' chain family. As to quaternary structure, the RNAP catalytic core consists of 2 alpha, 1 beta, 1 beta' and 1 omega subunit. When a sigma factor is associated with the core the holoenzyme is formed, which can initiate transcription. Requires Mg(2+) as cofactor. It depends on Zn(2+) as a cofactor.

It carries out the reaction RNA(n) + a ribonucleoside 5'-triphosphate = RNA(n+1) + diphosphate. DNA-dependent RNA polymerase catalyzes the transcription of DNA into RNA using the four ribonucleoside triphosphates as substrates. This Chlamydia felis (strain Fe/C-56) (Chlamydophila felis) protein is DNA-directed RNA polymerase subunit beta'.